Here is a 169-residue protein sequence, read N- to C-terminus: Peptide deformylase 1 (169 aa).

Fe cation-binding residues include C92 and H134. E135 is a catalytic residue. H138 serves as a coordination point for Fe cation.

Belongs to the polypeptide deformylase family. Fe(2+) is required as a cofactor.

It carries out the reaction N-terminal N-formyl-L-methionyl-[peptide] + H2O = N-terminal L-methionyl-[peptide] + formate. Functionally, removes the formyl group from the N-terminal Met of newly synthesized proteins. Requires at least a dipeptide for an efficient rate of reaction. N-terminal L-methionine is a prerequisite for activity but the enzyme has broad specificity at other positions. The polypeptide is Peptide deformylase 1 (Ralstonia nicotianae (strain ATCC BAA-1114 / GMI1000) (Ralstonia solanacearum)).